A 590-amino-acid chain; its full sequence is Aspartate--tRNA(Asp/Asn) ligase (590 aa).

An L-aspartate-binding site is contributed by glutamate 175. The interval glutamine 199 to lysine 202 is aspartate. Residues arginine 221 and histidine 450 each coordinate L-aspartate. An ATP-binding site is contributed by arginine 221–glutamate 223. Glutamate 484 contacts ATP. Arginine 491 is a binding site for L-aspartate. Residue glycine 536 to arginine 539 participates in ATP binding.

It belongs to the class-II aminoacyl-tRNA synthetase family. Type 1 subfamily. In terms of assembly, homodimer.

Its subcellular location is the cytoplasm. The catalysed reaction is tRNA(Asx) + L-aspartate + ATP = L-aspartyl-tRNA(Asx) + AMP + diphosphate. Its function is as follows. Aspartyl-tRNA synthetase with relaxed tRNA specificity since it is able to aspartylate not only its cognate tRNA(Asp) but also tRNA(Asn). Reaction proceeds in two steps: L-aspartate is first activated by ATP to form Asp-AMP and then transferred to the acceptor end of tRNA(Asp/Asn). The polypeptide is Aspartate--tRNA(Asp/Asn) ligase (Rhodopseudomonas palustris (strain BisA53)).